Reading from the N-terminus, the 310-residue chain is Porphobilinogen deaminase (310 aa).

Cys-242 carries the post-translational modification S-(dipyrrolylmethanemethyl)cysteine.

The protein belongs to the HMBS family. In terms of assembly, monomer. Dipyrromethane is required as a cofactor.

It catalyses the reaction 4 porphobilinogen + H2O = hydroxymethylbilane + 4 NH4(+). It functions in the pathway porphyrin-containing compound metabolism; protoporphyrin-IX biosynthesis; coproporphyrinogen-III from 5-aminolevulinate: step 2/4. In terms of biological role, tetrapolymerization of the monopyrrole PBG into the hydroxymethylbilane pre-uroporphyrinogen in several discrete steps. This is Porphobilinogen deaminase from Shewanella baltica (strain OS195).